An 89-amino-acid polypeptide reads, in one-letter code: Small ribosomal subunit protein uS15 (89 aa).

Basic and acidic residues predominate over residues 1-11; it reads MSIAAERKAEV. The tract at residues 1–24 is disordered; it reads MSIAAERKAEVIKTNATKAGDTGS.

This sequence belongs to the universal ribosomal protein uS15 family. As to quaternary structure, part of the 30S ribosomal subunit. Forms a bridge to the 50S subunit in the 70S ribosome, contacting the 23S rRNA.

Its function is as follows. One of the primary rRNA binding proteins, it binds directly to 16S rRNA where it helps nucleate assembly of the platform of the 30S subunit by binding and bridging several RNA helices of the 16S rRNA. Functionally, forms an intersubunit bridge (bridge B4) with the 23S rRNA of the 50S subunit in the ribosome. This chain is Small ribosomal subunit protein uS15, found in Bradyrhizobium diazoefficiens (strain JCM 10833 / BCRC 13528 / IAM 13628 / NBRC 14792 / USDA 110).